The following is a 29-amino-acid chain: Conotoxin Bu17 (29 aa).

Cystine bridges form between C4-C19, C5-C25, and C15-C26. C26 is modified (cysteine amide).

This sequence belongs to the conotoxin M superfamily. In terms of tissue distribution, expressed by the venom duct.

It localises to the secreted. The chain is Conotoxin Bu17 from Conus bullatus (Bubble cone).